We begin with the raw amino-acid sequence, 157 residues long: Spore germination protein GerT (157 aa).

The protein resides in the spore coat. Functionally, involved in spore germination; probably required at the earliest stage of germination. In Bacillus subtilis (strain 168), this protein is Spore germination protein GerT (gerT).